Reading from the N-terminus, the 227-residue chain is ATP phosphoribosyltransferase (227 aa).

It belongs to the ATP phosphoribosyltransferase family. Short subfamily. Heteromultimer composed of HisG and HisZ subunits.

The protein resides in the cytoplasm. It carries out the reaction 1-(5-phospho-beta-D-ribosyl)-ATP + diphosphate = 5-phospho-alpha-D-ribose 1-diphosphate + ATP. Its pathway is amino-acid biosynthesis; L-histidine biosynthesis; L-histidine from 5-phospho-alpha-D-ribose 1-diphosphate: step 1/9. In terms of biological role, catalyzes the condensation of ATP and 5-phosphoribose 1-diphosphate to form N'-(5'-phosphoribosyl)-ATP (PR-ATP). Has a crucial role in the pathway because the rate of histidine biosynthesis seems to be controlled primarily by regulation of HisG enzymatic activity. The chain is ATP phosphoribosyltransferase from Nitrosospira multiformis (strain ATCC 25196 / NCIMB 11849 / C 71).